Consider the following 314-residue polypeptide: MTHKILPISIIYINKEMLNQRIDNFMRSKFKSVPKSMIYRIIRTGKIRINKKRIKPHYKLKIGDILKIPPIKILCDIKNTFFPLNHSTNLLNRILYEDSHLLIINKPSGIAVHGGSGLNFGVIEYFRKLRPLNKFLELVHRIDRDTSGVLILAKKRTSLVSLHEQLREKKIKKEYIALVHGLWPDHIKKISEPLLKIQFKNKQKMVLIDKKGKPSETYFQIKKKFSSSTLLSIIPKTGRTHQIRVHALHAGHPIFFDKRYGKNDLDADIKNNHKINRLLLHSSGVHFIHPKNGNKIYIKAPLDIDFQNYLNTII.

Residues 20–84 (QRIDNFMRSK…CDIKNTFFPL (65 aa)) enclose the S4 RNA-binding domain. Residue aspartate 143 is part of the active site.

This sequence belongs to the pseudouridine synthase RluA family.

The enzyme catalyses uridine(955/2504/2580) in 23S rRNA = pseudouridine(955/2504/2580) in 23S rRNA. In terms of biological role, responsible for synthesis of pseudouridine from uracil at positions 955, 2504 and 2580 in 23S ribosomal RNA. The protein is Ribosomal large subunit pseudouridine synthase C (rluC) of Buchnera aphidicola subsp. Acyrthosiphon pisum (strain APS) (Acyrthosiphon pisum symbiotic bacterium).